A 382-amino-acid polypeptide reads, in one-letter code: D-galactonate dehydratase (382 aa).

Position 183 (D183) interacts with Mg(2+). H185 acts as the Proton donor in catalysis. Residues E209 and E235 each coordinate Mg(2+). The active-site Proton acceptor is the H285. Residues 361–382 (NENPPDWRNPVWRHSDGSIAEW) form a disordered region.

The protein belongs to the mandelate racemase/muconate lactonizing enzyme family. GalD subfamily. Mg(2+) serves as cofactor.

The enzyme catalyses D-galactonate = 2-dehydro-3-deoxy-D-galactonate + H2O. Its pathway is carbohydrate acid metabolism; D-galactonate degradation; D-glyceraldehyde 3-phosphate and pyruvate from D-galactonate: step 1/3. Catalyzes the dehydration of D-galactonate to 2-keto-3-deoxy-D-galactonate. The chain is D-galactonate dehydratase from Xanthomonas oryzae pv. oryzae (strain MAFF 311018).